We begin with the raw amino-acid sequence, 387 residues long: Phosphoglycerate kinase (387 aa).

Residues 21–23, Arg-36, 59–62, Arg-113, and Arg-146 contribute to the substrate site; these read DLN and HLGR. ATP is bound by residues Lys-197, Glu-314, and 340-343; that span reads GGDT.

This sequence belongs to the phosphoglycerate kinase family. As to quaternary structure, monomer.

It localises to the cytoplasm. The catalysed reaction is (2R)-3-phosphoglycerate + ATP = (2R)-3-phospho-glyceroyl phosphate + ADP. Its pathway is carbohydrate degradation; glycolysis; pyruvate from D-glyceraldehyde 3-phosphate: step 2/5. The polypeptide is Phosphoglycerate kinase (Aeromonas salmonicida (strain A449)).